Consider the following 90-residue polypeptide: Probable Fe(2+)-trafficking protein (90 aa).

It belongs to the Fe(2+)-trafficking protein family.

In terms of biological role, could be a mediator in iron transactions between iron acquisition and iron-requiring processes, such as synthesis and/or repair of Fe-S clusters in biosynthetic enzymes. In Nitrosospira multiformis (strain ATCC 25196 / NCIMB 11849 / C 71), this protein is Probable Fe(2+)-trafficking protein.